We begin with the raw amino-acid sequence, 644 residues long: Arginine--tRNA ligase (644 aa).

The 'HIGH' region motif lies at 134–144 (VNPTKPLHMGH).

It belongs to the class-I aminoacyl-tRNA synthetase family.

It is found in the cytoplasm. It catalyses the reaction tRNA(Arg) + L-arginine + ATP = L-arginyl-tRNA(Arg) + AMP + diphosphate. This Thermococcus sibiricus (strain DSM 12597 / MM 739) protein is Arginine--tRNA ligase.